Consider the following 1587-residue polypeptide: NHS-like protein 1 (1587 aa).

Serine 24 is subject to Phosphoserine. 2 disordered regions span residues phenylalanine 140–leucine 163 and arginine 176–threonine 202. Polar residues predominate over residues threonine 179–lysine 196. Serine 197 and serine 328 each carry phosphoserine. Residues serine 431 to serine 446 show a composition bias toward polar residues. 2 disordered regions span residues serine 431 to histidine 470 and serine 549 to cysteine 584. Over residues lysine 449–histidine 470 the composition is skewed to basic and acidic residues. Serine 563 is subject to Phosphoserine. Positions glycine 573–cysteine 584 are enriched in polar residues. Residue serine 629 is modified to Phosphoserine. Disordered regions lie at residues lysine 661–glycine 687, serine 705–lysine 767, and asparagine 789–methionine 1059. A compositionally biased stretch (low complexity) spans serine 705–serine 720. Polar residues-rich tracts occupy residues serine 730–valine 750, threonine 757–lysine 767, glycine 792–alanine 801, and arginine 838–alanine 855. Low complexity predominate over residues serine 885–methionine 911. Pro residues-rich tracts occupy residues alanine 923–serine 934, proline 958–alanine 972, and serine 998–aspartate 1021. Over residues serine 1040–cysteine 1055 the composition is skewed to basic and acidic residues. The residue at position 1079 (serine 1079) is a Phosphoserine. Disordered regions lie at residues alanine 1083–alanine 1534 and valine 1565–serine 1587. Composition is skewed to polar residues over residues proline 1089–alanine 1099 and serine 1112–glutamine 1141. Residues serine 1157 and serine 1218 each carry the phosphoserine modification. Basic and acidic residues predominate over residues alanine 1222 to serine 1234. Polar residues predominate over residues glutamine 1275 to glutamate 1285. A compositionally biased stretch (basic and acidic residues) spans glycine 1360–arginine 1370. 2 positions are modified to phosphoserine: serine 1373 and serine 1375. Threonine 1379 bears the Phosphothreonine mark. Polar residues predominate over residues glutamine 1392–asparagine 1409. A compositionally biased stretch (basic and acidic residues) spans lysine 1434–proline 1447. 2 stretches are compositionally biased toward low complexity: residues serine 1448–proline 1460 and serine 1484–serine 1503. Polar residues predominate over residues proline 1576–serine 1587.

Belongs to the NHS family.

The polypeptide is NHS-like protein 1 (Nhsl1) (Mus musculus (Mouse)).